Consider the following 108-residue polypeptide: DNA-binding protein HBbu (108 aa).

The protein belongs to the bacterial histone-like protein family.

In terms of biological role, histone-like DNA-binding protein which is capable of wrapping DNA to stabilize it, and thus to prevent its denaturation under extreme environmental conditions. In Borrelia parkeri, this protein is DNA-binding protein HBbu (hbb).